Reading from the N-terminus, the 329-residue chain is DNA-directed RNA polymerase subunit alpha (329 aa).

The tract at residues 1–235 (MQGSVTEFLK…EQLDAFVDLR (235 aa)) is alpha N-terminal domain (alpha-NTD). Residues 249–329 (FDPILLRPVD…NWPPASIAED (81 aa)) form an alpha C-terminal domain (alpha-CTD) region.

Belongs to the RNA polymerase alpha chain family. In terms of assembly, homodimer. The RNAP catalytic core consists of 2 alpha, 1 beta, 1 beta' and 1 omega subunit. When a sigma factor is associated with the core the holoenzyme is formed, which can initiate transcription.

It catalyses the reaction RNA(n) + a ribonucleoside 5'-triphosphate = RNA(n+1) + diphosphate. Functionally, DNA-dependent RNA polymerase catalyzes the transcription of DNA into RNA using the four ribonucleoside triphosphates as substrates. This is DNA-directed RNA polymerase subunit alpha from Actinobacillus pleuropneumoniae serotype 5b (strain L20).